Reading from the N-terminus, the 176-residue chain is Ribosome maturation factor RimM (176 aa).

The 74-residue stretch at Q103–I176 folds into the PRC barrel domain.

This sequence belongs to the RimM family. Binds ribosomal protein uS19.

It localises to the cytoplasm. An accessory protein needed during the final step in the assembly of 30S ribosomal subunit, possibly for assembly of the head region. Essential for efficient processing of 16S rRNA. May be needed both before and after RbfA during the maturation of 16S rRNA. It has affinity for free ribosomal 30S subunits but not for 70S ribosomes. The polypeptide is Ribosome maturation factor RimM (Thermotoga neapolitana (strain ATCC 49049 / DSM 4359 / NBRC 107923 / NS-E)).